The chain runs to 416 residues: MNYALETNDKEIFDLIHEELDRQNTHLEMIASENFTFPAVMEAMGSVLTNKYAEGYPYKRYYGGCEFVDRVEEIAIERAKKLFGCGFANVQPHAGSQANVAVYNALLKPYDKILGMDLSHGGHLTHGAKVSVTGQTYQSFFYGVELDGYINYDKVEEIAKIVKPQMIVCGFSAYARELDFKRFREIADSVGALLLGDVAHVAGLIVAGEYPNPFPHCHIVTTTTHKTLRGPRGGMILTNDEEIAKKIDKAVFPGMQGGPLMHVIAAKAVGFGENLKPEWKEYAKQVKANAKVLAKVLMARGYTLVSGGTDNHLILVSLLDKEFSGKDADRALGEAGITVNKNTVPGETRSPFVTSGVRIGSAALTARGMREKEFEFIATKIADVLDDVNNAAKHAEIKKEIAEFAKGFPVYTKAIF.

(6S)-5,6,7,8-tetrahydrofolate contacts are provided by residues Leu-118 and 122-124 (GHL). Lys-226 bears the N6-(pyridoxal phosphate)lysine mark. Residues Glu-242 and 350 to 352 (SPF) each bind (6S)-5,6,7,8-tetrahydrofolate.

This sequence belongs to the SHMT family. In terms of assembly, homodimer. Pyridoxal 5'-phosphate is required as a cofactor.

It is found in the cytoplasm. It catalyses the reaction (6R)-5,10-methylene-5,6,7,8-tetrahydrofolate + glycine + H2O = (6S)-5,6,7,8-tetrahydrofolate + L-serine. The protein operates within one-carbon metabolism; tetrahydrofolate interconversion. It participates in amino-acid biosynthesis; glycine biosynthesis; glycine from L-serine: step 1/1. Functionally, catalyzes the reversible interconversion of serine and glycine with tetrahydrofolate (THF) serving as the one-carbon carrier. This reaction serves as the major source of one-carbon groups required for the biosynthesis of purines, thymidylate, methionine, and other important biomolecules. Also exhibits THF-independent aldolase activity toward beta-hydroxyamino acids, producing glycine and aldehydes, via a retro-aldol mechanism. The sequence is that of Serine hydroxymethyltransferase from Wolinella succinogenes (strain ATCC 29543 / DSM 1740 / CCUG 13145 / JCM 31913 / LMG 7466 / NCTC 11488 / FDC 602W) (Vibrio succinogenes).